A 5209-amino-acid chain; its full sequence is E3 ubiquitin-protein ligase rnf213-alpha (5209 aa).

2 stretches are compositionally biased toward polar residues: residues 27-52 (SQSYETTQGTPHDKSQTPSIVPQITN) and 61-72 (ESKSLEIQNANV). Residues 27 to 373 (SQSYETTQGT…KRNTRSTQHI (347 aa)) form a disordered region. Positions 85–101 (PKKKKRKKRKKEKKKKS) are enriched in basic residues. The span at 108–118 (SSLTSDLSDIS) shows a compositional bias: low complexity. Residues 119–128 (LTDKEKKMDT) are compositionally biased toward basic and acidic residues. Polar residues-rich tracts occupy residues 167 to 177 (LSASALTTGSS) and 184 to 195 (IGTTQKPVSASA). Positions 205 to 218 (QTKEEKVKCKDEGQ) are enriched in basic and acidic residues. Residues 219-243 (KSLSAKAQHTPNANVDQNANVQSDA) are compositionally biased toward polar residues. Residues 256-269 (KSSSVKTKPSKSTV) are compositionally biased toward low complexity. Composition is skewed to basic and acidic residues over residues 271-288 (DPKKTESEKQKSGERDNE) and 330-352 (MKVEKKPAGGKKDSSADQKSKES). ATP-binding positions include 2036 to 2041 (GVGKSL), Glu-2135, Asp-2193, Arg-2252, Lys-2535, and Ser-2610. Zn(2+) contacts are provided by Cys-4005, Cys-4008, Cys-4020, His-4022, Cys-4025, Cys-4028, Cys-4040, Cys-4043, Cys-4507, and His-4511. Residues 4005–4043 (CPVCMGDPRDPLSLPCDHIYCLTCIRQWLVPGQMHCPLC) form an RING-type zinc finger. The RZ-type zinc finger occupies 4487-4557 (MPDDMLAVAQ…MQIQADRTQS (71 aa)). The Nucleophile; for E3 ubiquitin-lipopolysaccharide ligase activity role is filled by Cys-4518. Cys-4527 and Cys-4530 together coordinate Zn(2+).

It belongs to the AAA ATPase family.

The protein resides in the cytoplasm. It is found in the cytosol. It localises to the lipid droplet. The catalysed reaction is S-ubiquitinyl-[E2 ubiquitin-conjugating enzyme]-L-cysteine + [acceptor protein]-L-lysine = [E2 ubiquitin-conjugating enzyme]-L-cysteine + N(6)-ubiquitinyl-[acceptor protein]-L-lysine.. The enzyme catalyses ATP + H2O = ADP + phosphate + H(+). Its pathway is protein modification; protein ubiquitination. Atypical E3 ubiquitin ligase that can catalyze ubiquitination of both proteins and lipids, and which is involved in various processes, such as lipid metabolism, angiogenesis and cell-autonomous immunity. Acts as a key immune sensor by catalyzing ubiquitination of the lipid A moiety of bacterial lipopolysaccharide (LPS) via its RZ-type zinc-finger: restricts the proliferation of cytosolic bacteria, such as Salmonella, by generating the bacterial ubiquitin coat through the ubiquitination of LPS. Ubiquitination of LPS triggers cell-autonomous immunity, such as antibacterial autophagy, leading to degradation of the microbial invader. Involved in lipid metabolism by regulating fat storage and lipid droplet formation; act by inhibiting the lipolytic process. Also regulates lipotoxicity by inhibiting desaturation of fatty acids. Also acts as an E3 ubiquitin-protein ligase via its RING-type zinc finger. Involved in the non-canonical Wnt signaling pathway in vascular development: acts by mediating ubiquitination and degradation of proteins downstream of rspo3, leading to inhibit the non-canonical Wnt signaling pathway and promoting vessel regression. Also has ATPase activity; ATPase activity is required for ubiquitination of LPS. Also involved in neuromuscular regulation. The protein is E3 ubiquitin-protein ligase rnf213-alpha of Danio rerio (Zebrafish).